Consider the following 1159-residue polypeptide: ATP-dependent helicase/deoxyribonuclease subunit B (1159 aa).

The UvrD-like helicase ATP-binding domain maps to Met-1 to Asn-275. Gly-8 to Ser-15 serves as a coordination point for ATP. Positions Asn-269–Val-583 constitute a UvrD-like helicase C-terminal domain. [4Fe-4S] cluster contacts are provided by Cys-784, Cys-1112, Cys-1115, and Cys-1121.

Belongs to the helicase family. AddB/RexB type 1 subfamily. In terms of assembly, heterodimer of AddA and AddB. Mg(2+) is required as a cofactor. It depends on [4Fe-4S] cluster as a cofactor.

In terms of biological role, the heterodimer acts as both an ATP-dependent DNA helicase and an ATP-dependent, dual-direction single-stranded exonuclease. Recognizes the chi site generating a DNA molecule suitable for the initiation of homologous recombination. The AddB subunit has 5' -&gt; 3' nuclease activity but not helicase activity. This Staphylococcus epidermidis (strain ATCC 35984 / DSM 28319 / BCRC 17069 / CCUG 31568 / BM 3577 / RP62A) protein is ATP-dependent helicase/deoxyribonuclease subunit B.